A 453-amino-acid chain; its full sequence is Bifunctional protein GlmU (453 aa).

The interval 1–226 (MAFSVVILAA…EIEVEGINNR (226 aa)) is pyrophosphorylase. Residues 8 to 11 (LAAG), Lys22, Gln73, and 78 to 79 (GT) contribute to the UDP-N-acetyl-alpha-D-glucosamine site. A Mg(2+)-binding site is contributed by Asp102. Residues Gly137, Glu151, Asn166, and Asn224 each coordinate UDP-N-acetyl-alpha-D-glucosamine. Mg(2+) is bound at residue Asn224. The interval 227 to 247 (KQLAAIERAFQFEQAQELMMQ) is linker. Residues 248–453 (GVSLLDPHRF…SGWQRPTKPE (206 aa)) are N-acetyltransferase. 2 residues coordinate UDP-N-acetyl-alpha-D-glucosamine: Arg330 and Lys348. The active-site Proton acceptor is the His360. UDP-N-acetyl-alpha-D-glucosamine contacts are provided by Tyr363 and Asn374. Acetyl-CoA-binding positions include Ala377, 383–384 (NY), Ser402, Ala420, and Arg437.

This sequence in the N-terminal section; belongs to the N-acetylglucosamine-1-phosphate uridyltransferase family. In the C-terminal section; belongs to the transferase hexapeptide repeat family. Homotrimer. Mg(2+) serves as cofactor.

The protein resides in the cytoplasm. It carries out the reaction alpha-D-glucosamine 1-phosphate + acetyl-CoA = N-acetyl-alpha-D-glucosamine 1-phosphate + CoA + H(+). The enzyme catalyses N-acetyl-alpha-D-glucosamine 1-phosphate + UTP + H(+) = UDP-N-acetyl-alpha-D-glucosamine + diphosphate. It functions in the pathway nucleotide-sugar biosynthesis; UDP-N-acetyl-alpha-D-glucosamine biosynthesis; N-acetyl-alpha-D-glucosamine 1-phosphate from alpha-D-glucosamine 6-phosphate (route II): step 2/2. Its pathway is nucleotide-sugar biosynthesis; UDP-N-acetyl-alpha-D-glucosamine biosynthesis; UDP-N-acetyl-alpha-D-glucosamine from N-acetyl-alpha-D-glucosamine 1-phosphate: step 1/1. It participates in bacterial outer membrane biogenesis; LPS lipid A biosynthesis. Functionally, catalyzes the last two sequential reactions in the de novo biosynthetic pathway for UDP-N-acetylglucosamine (UDP-GlcNAc). The C-terminal domain catalyzes the transfer of acetyl group from acetyl coenzyme A to glucosamine-1-phosphate (GlcN-1-P) to produce N-acetylglucosamine-1-phosphate (GlcNAc-1-P), which is converted into UDP-GlcNAc by the transfer of uridine 5-monophosphate (from uridine 5-triphosphate), a reaction catalyzed by the N-terminal domain. The polypeptide is Bifunctional protein GlmU (Pseudoalteromonas atlantica (strain T6c / ATCC BAA-1087)).